The following is a 305-amino-acid chain: 2-pyrone-4,6-dicarbaxylate hydrolase (305 aa).

Substrate is bound by residues 32–34 (HCH), Y50, T78, R125, R131, Y158, and H182. D258 (proton acceptor) is an active-site residue. N263 contacts substrate.

The protein belongs to the metallo-dependent hydrolases superfamily. PDC hydrolase family.

The catalysed reaction is 2-oxo-2H-pyran-4,6-dicarboxylate + H2O = (1E)-4-oxobut-1-ene-1,2,4-tricarboxylate + H(+). Strongly inhibited by 1 mM Zn(2+), Cu(2+), Mn(2+) and Co(2+) ions. Also inhibited by 5,5'-dithiobis(2-nitrobenzoic acid) (Ellman reagent) in vitro. Involved in the degradation of aromatic compounds via the protocatechuate 4,5-cleavage pathway. Catalyzes the hydrolysis of 2-pyrone-4,6-dicarboxylate (PDC) to oxalomesaconate (OMA). Also catalyzes the reverse reaction. The polypeptide is 2-pyrone-4,6-dicarbaxylate hydrolase (Comamonas testosteroni (Pseudomonas testosteroni)).